Consider the following 597-residue polypeptide: 2-succinyl-5-enolpyruvyl-6-hydroxy-3-cyclohexene-1-carboxylate synthase (597 aa).

Belongs to the TPP enzyme family. MenD subfamily. As to quaternary structure, homodimer. Mg(2+) serves as cofactor. It depends on Mn(2+) as a cofactor. Requires thiamine diphosphate as cofactor.

It carries out the reaction isochorismate + 2-oxoglutarate + H(+) = 5-enolpyruvoyl-6-hydroxy-2-succinyl-cyclohex-3-ene-1-carboxylate + CO2. Its pathway is quinol/quinone metabolism; 1,4-dihydroxy-2-naphthoate biosynthesis; 1,4-dihydroxy-2-naphthoate from chorismate: step 2/7. It participates in cofactor biosynthesis; phylloquinone biosynthesis. Functionally, catalyzes the thiamine diphosphate-dependent decarboxylation of 2-oxoglutarate and the subsequent addition of the resulting succinic semialdehyde-thiamine pyrophosphate anion to isochorismate to yield 2-succinyl-5-enolpyruvyl-6-hydroxy-3-cyclohexene-1-carboxylate (SEPHCHC). The chain is 2-succinyl-5-enolpyruvyl-6-hydroxy-3-cyclohexene-1-carboxylate synthase from Synechococcus sp. (strain JA-3-3Ab) (Cyanobacteria bacterium Yellowstone A-Prime).